Here is a 205-residue protein sequence, read N- to C-terminus: Ypt/Rab-type GTPase avaA (205 aa).

GTP is bound by residues 17–23, 33–40, glycine 66, 125–128, and 157–159; these read SGVGKTS, FSGSYKAT, NKID, and SAK. Positions 37 to 45 match the Effector region motif; sequence YKATIGADF. S-geranylgeranyl cysteine attachment occurs at residues cysteine 203 and cysteine 205. Cysteine 205 carries the post-translational modification Cysteine methyl ester.

The protein belongs to the small GTPase superfamily. Rab family.

Its activity is regulated as follows. Rab activation is generally mediated by a guanine exchange factor (GEF), while inactivation through hydrolysis of bound GTP is catalyzed by a GTPase activating protein (GAP). Ypt/Rab-type GTPases are key regulators of membrane trafficking and intracellular vesicular transport. They act as molecular switches that convert between GTP-bound and GDP-bound states, and regulate virtually all steps of membrane traffic from the formation of the transport vesicle at the donor membrane to its fusion at the target membrane. In the GDP-bound state, Ypt proteins are predominantly cytosolic, solubilized through the interaction with a GDP dissociation inhibitor (GDI). In the GTP-bound state, the proteins are membrane bound and interact with specific effector proteins that select cargo, promote vesicle movement, or verify the correct site of fusion. AvaA functions in vacuolar biogenesis. This chain is Ypt/Rab-type GTPase avaA, found in Emericella nidulans (strain FGSC A4 / ATCC 38163 / CBS 112.46 / NRRL 194 / M139) (Aspergillus nidulans).